An 814-amino-acid chain; its full sequence is Dimethyl sulfoxide reductase DmsA (814 aa).

The segment at residues 1–45 is a signal peptide (tat-type signal); the sequence is MKTKIPDAVLAAEVSRRGLVKTTAIGGLAMASSALTLPFSRIAHA. Residues 56–118 form the 4Fe-4S Mo/W bis-MGD-type domain; the sequence is EKVIWSACTV…SMRRRVYNPD (63 aa). [4Fe-4S] cluster contacts are provided by C63, C67, C71, and C104. Mo-bis(molybdopterin guanine dinucleotide) is bound by residues 172 to 176, S205, 244 to 245, 270 to 271, 291 to 293, 386 to 387, R390, N488, 512 to 513, H701, 707 to 709, N788, and 804 to 805; these read LGGTM, ET, ID, GTD, WG, HST, and SH.

Belongs to the prokaryotic molybdopterin-containing oxidoreductase family. In terms of assembly, heterotrimeric enzyme composed of a catalytic heterodimer (DmsAB) and a membrane anchor protein (DmsC). The cofactor is [4Fe-4S] cluster. It depends on Mo-bis(molybdopterin guanine dinucleotide) as a cofactor. In terms of processing, exported by the Tat system. The position of the signal peptide cleavage has been experimentally proven. Can also be exported by the Sec system.

It is found in the cell membrane. It carries out the reaction dimethyl sulfide + a menaquinone + H2O = dimethyl sulfoxide + a menaquinol. With respect to regulation, inhibited by dithionite, sodium hydrogensulfite and tungstate. Functionally, catalyzes the reduction of dimethyl sulfoxide (DMSO) to dimethyl sulfide (DMS). DMSO reductase serves as the terminal reductase under anaerobic conditions, with DMSO being the terminal electron acceptor. Terminal reductase during anaerobic growth on various sulfoxides and N-oxide compounds. Allows E.coli to grow anaerobically on DMSO as respiratory oxidant. In Escherichia coli (strain K12), this protein is Dimethyl sulfoxide reductase DmsA (dmsA).